We begin with the raw amino-acid sequence, 928 residues long: Tyrosine-protein phosphatase 3 (928 aa).

Thr75 is subject to Phosphothreonine. The 122-residue stretch at 111-232 (PDEKVLLLDV…FKILFPDHIN (122 aa)) folds into the Rhodanese domain. Residues 247–307 (KSPKTNLMNS…PRNVLSDSPM (61 aa)) form a disordered region. Ser248 carries the phosphoserine modification. Composition is skewed to polar residues over residues 249 to 259 (PKTNLMNSLHN) and 265 to 275 (TATTPLSSPQM). The span at 280–289 (KVPDDSRSDH) shows a compositional bias: basic and acidic residues. A compositionally biased stretch (low complexity) spans 290–307 (SNFSSSPSPRNVLSDSPM). 2 positions are modified to phosphoserine: Ser297 and Ser368. Disordered stretches follow at residues 467–487 (LTSTSSSTIMPPKFPDVNKVQ) and 672–713 (MRKN…NNNN). The 377-residue stretch at 502 to 878 (YKSMLSLESD…IFIYDCLLFY (377 aa)) folds into the Tyrosine-protein phosphatase domain. The span at 672–691 (MRKNTMGTQNSSLYSAGVQG) shows a compositional bias: polar residues. Residues 692–713 (NSSNYSTDNDNDNDNNNNNNNN) are compositionally biased toward low complexity. Residue Cys804 is the Phosphocysteine intermediate of the active site.

The protein belongs to the protein-tyrosine phosphatase family. Non-receptor class subfamily. Interacts with HOG1.

It localises to the cytoplasm. It carries out the reaction O-phospho-L-tyrosyl-[protein] + H2O = L-tyrosyl-[protein] + phosphate. Its function is as follows. Major phosphatase responsible for tyrosine dephosphorylation of MAP kinases FUS3 and HOG1 to inactivate their activity; it also has important roles, along with MSG5, in the inactivation of FUS3 following pheromone stimulation. This chain is Tyrosine-protein phosphatase 3 (PTP3), found in Saccharomyces cerevisiae (strain ATCC 204508 / S288c) (Baker's yeast).